Here is a 550-residue protein sequence, read N- to C-terminus: Cytokinin dehydrogenase 10 (550 aa).

The first 26 residues, 1–26 (MMPRAQLTTFLIVTSFLSTVPYLRAP), serve as a signal peptide directing secretion. The 182-residue stretch at 64 to 245 (VHATPNGVFR…TRARIRLEPA (182 aa)) folds into the FAD-binding PCMH-type domain. FAD is bound by residues Gly100, Lys101, and Gly102. A Pros-8alpha-FAD histidine modification is found at His103. FAD contacts are provided by Ser104, Gln108, Asp169, Thr174, Ser180, Ile184, and Ile235. Asn289 carries N-linked (GlcNAc...) asparagine glycosylation. Positions 489, 524, and 527 each coordinate FAD. The segment at 523–550 (LSPGQGIFPPPPPPSPPPPAAGEPITAS) is disordered. Over residues 530–543 (FPPPPPPSPPPPAA) the composition is skewed to pro residues.

This sequence belongs to the oxygen-dependent FAD-linked oxidoreductase family. As to quaternary structure, monomer. FAD serves as cofactor.

The protein resides in the secreted. It is found in the extracellular space. It catalyses the reaction N(6)-dimethylallyladenine + A + H2O = 3-methyl-2-butenal + adenine + AH2. In terms of biological role, catalyzes the oxidation of cytokinins, a family of N(6)-substituted adenine derivatives that are plant hormones, where the substituent is an isopentenyl group. The polypeptide is Cytokinin dehydrogenase 10 (CKX10) (Oryza sativa subsp. japonica (Rice)).